The chain runs to 198 residues: Glutamyl-tRNA(Gln) amidotransferase subunit C, mitochondrial (198 aa).

The protein belongs to the GatC family. In terms of assembly, subunit of the heterotrimeric GatCAB amidotransferase (AdT) complex, composed of A, B and C subunits.

It is found in the mitochondrion. The catalysed reaction is L-glutamyl-tRNA(Gln) + L-glutamine + ATP + H2O = L-glutaminyl-tRNA(Gln) + L-glutamate + ADP + phosphate + H(+). In terms of biological role, allows the formation of correctly charged Gln-tRNA(Gln) through the transamidation of misacylated Glu-tRNA(Gln) in the mitochondria. The reaction takes place in the presence of glutamine and ATP through an activated gamma-phospho-Glu-tRNA(Gln). The sequence is that of Glutamyl-tRNA(Gln) amidotransferase subunit C, mitochondrial from Caenorhabditis remanei (Caenorhabditis vulgaris).